Here is a 690-residue protein sequence, read N- to C-terminus: Kelch-like protein 8 (690 aa).

The 68-residue stretch at 111–178 (CDVELLVAGS…IYTDKIAITM (68 aa)) folds into the BTB domain. In terms of domain architecture, BACK spans 213 to 314 (CMSLYHFSDI…VGWNFLCEAV (102 aa)). Kelch repeat units lie at residues 383 to 430 (AIFC…SANG), 431 to 477 (NLYA…SIEN), 478 to 524 (VIYA…VIGR), 525 to 571 (YLFA…VLDG), 572 to 618 (YLYA…ALGG), and 620 to 665 (VYAI…WANV).

As to quaternary structure, component of the BCR(kel-8) E3 ubiquitin ligase complex, at least composed of cul-3, kel-8 and rbx-1. Interacts with rpy-1. Expressed in neurons.

The protein resides in the synapse. The protein operates within protein modification; protein ubiquitination. Substrate-specific adapter of a BCR (BTB-CUL3-RBX1) E3 ubiquitin ligase complex that regulates degradation of glutamate receptors in neurons. The BCR(kel-8) ubiquitin ligase complex mediates ubiquitination and subsequent degradation of rpy-1. Indirectly regulates the protein turnover of glr-1, possibly via ubiquitination and degradation of rpy-1. The chain is Kelch-like protein 8 (kel-8) from Caenorhabditis elegans.